A 378-amino-acid polypeptide reads, in one-letter code: Putative UDP-N-acetylglucosamine 2-epimerase (378 aa).

This sequence belongs to the UDP-N-acetylglucosamine 2-epimerase family.

The protein resides in the cytoplasm. The enzyme catalyses UDP-N-acetyl-alpha-D-glucosamine = UDP-N-acetyl-alpha-D-mannosamine. This chain is Putative UDP-N-acetylglucosamine 2-epimerase, found in Thermotoga maritima (strain ATCC 43589 / DSM 3109 / JCM 10099 / NBRC 100826 / MSB8).